The sequence spans 396 residues: Elongation factor Tu (396 aa).

In terms of domain architecture, tr-type G spans 11-205 (KPHVNIGTIG…TVDEYIPTPE (195 aa)). The G1 stretch occupies residues 20–27 (GHVDHGKT). 20–27 (GHVDHGKT) contributes to the GTP binding site. Mg(2+) is bound at residue threonine 27. Residues 61-65 (GITIN) form a G2 region. Positions 82–85 (DAPG) are G3. Residues 82-86 (DAPGH) and 137-140 (NKCD) contribute to the GTP site. Residues 137–140 (NKCD) form a G4 region. Residues 175–177 (SAL) form a G5 region.

Belongs to the TRAFAC class translation factor GTPase superfamily. Classic translation factor GTPase family. EF-Tu/EF-1A subfamily. In terms of assembly, monomer.

The protein localises to the cytoplasm. The enzyme catalyses GTP + H2O = GDP + phosphate + H(+). Functionally, GTP hydrolase that promotes the GTP-dependent binding of aminoacyl-tRNA to the A-site of ribosomes during protein biosynthesis. This Lactobacillus helveticus (strain DPC 4571) protein is Elongation factor Tu.